The sequence spans 634 residues: Threonine--tRNA ligase (634 aa).

Positions 1-61 (MINIRFPDGS…NSNCELRLIT (61 aa)) constitute a TGS domain. The tract at residues 241–532 (DHRKIGKVLD…LIEHYAGNLP (292 aa)) is catalytic. Positions 332, 383, and 509 each coordinate Zn(2+).

This sequence belongs to the class-II aminoacyl-tRNA synthetase family. In terms of assembly, homodimer. Requires Zn(2+) as cofactor.

Its subcellular location is the cytoplasm. It catalyses the reaction tRNA(Thr) + L-threonine + ATP = L-threonyl-tRNA(Thr) + AMP + diphosphate + H(+). Functionally, catalyzes the attachment of threonine to tRNA(Thr) in a two-step reaction: L-threonine is first activated by ATP to form Thr-AMP and then transferred to the acceptor end of tRNA(Thr). Also edits incorrectly charged L-seryl-tRNA(Thr). The polypeptide is Threonine--tRNA ligase (Francisella tularensis subsp. holarctica (strain FTNF002-00 / FTA)).